A 23-amino-acid chain; its full sequence is Acetylcholine receptor subunit gamma (23 aa).

This sequence belongs to the ligand-gated ion channel (TC 1.A.9) family. Acetylcholine receptor (TC 1.A.9.1) subfamily. Gamma/CHRNG sub-subfamily. In terms of assembly, pentamer of two alpha chains, and one each of the beta, delta, and gamma chains.

It is found in the postsynaptic cell membrane. It localises to the cell membrane. The enzyme catalyses K(+)(in) = K(+)(out). It catalyses the reaction Na(+)(in) = Na(+)(out). In terms of biological role, after binding acetylcholine, the AChR responds by an extensive change in conformation that affects all subunits and leads to opening of an ion-conducting channel across the plasma membrane. The protein is Acetylcholine receptor subunit gamma (chrng) of Electrophorus electricus (Electric eel).